Reading from the N-terminus, the 463-residue chain is uncharacterized protein (463 aa).

Residues leucine 12–lysine 70 form the TRAM domain. [4Fe-4S] cluster contacts are provided by cysteine 83, cysteine 89, cysteine 92, and cysteine 171. Glutamine 295, tyrosine 324, glutamate 345, and aspartate 390 together coordinate S-adenosyl-L-methionine. The active-site Nucleophile is cysteine 417.

It belongs to the class I-like SAM-binding methyltransferase superfamily. RNA M5U methyltransferase family.

This is an uncharacterized protein from Synechocystis sp. (strain ATCC 27184 / PCC 6803 / Kazusa).